The primary structure comprises 356 residues: Cell division protein ZipA (356 aa).

Residues 1-6 (MEDLQL) are Periplasmic-facing. The helical transmembrane segment at 7 to 27 (VLFVLGAIAIVAVLVHGFWSI) threads the bilayer. The Cytoplasmic segment spans residues 28 to 356 (RRQQPKSLKD…DYLHRIRANA (329 aa)). The tract at residues 132–155 (PAQPDFSLQPPVAKEQHRGPKVSR) is disordered.

It belongs to the ZipA family. Interacts with FtsZ via their C-terminal domains.

It is found in the cell inner membrane. Its function is as follows. Essential cell division protein that stabilizes the FtsZ protofilaments by cross-linking them and that serves as a cytoplasmic membrane anchor for the Z ring. Also required for the recruitment to the septal ring of downstream cell division proteins. This chain is Cell division protein ZipA, found in Shewanella baltica (strain OS185).